The following is a 421-amino-acid chain: Proton extrusion protein PxcA (421 aa).

The tract at residues 124–153 (PTVHSSNPDDSQLMTSKNNSKPVPDPESDD) is disordered. Positions 125–144 (TVHSSNPDDSQLMTSKNNSK) are enriched in polar residues. 4 consecutive transmembrane segments (helical) span residues 203 to 223 (FVLL…SFIV), 298 to 318 (AIKN…LLIS), 345 to 365 (IIIL…WEVI), and 381 to 401 (FIFL…KYWI).

Belongs to the CemA family.

It localises to the cell inner membrane. In terms of biological role, required for H(+) efflux immediately after light irradiation to form a rapid H(+) concentration gradient across the thylakoid membranes. Together with PxcL, contributes to transient H(+) uptake following dark to light transition. The protein is Proton extrusion protein PxcA of Synechococcus sp. (strain ATCC 27144 / PCC 6301 / SAUG 1402/1) (Anacystis nidulans).